Reading from the N-terminus, the 249-residue chain is Undecaprenyl-diphosphatase (249 aa).

8 helical membrane-spanning segments follow: residues 11 to 31 (GLTEFLPVSSSGHLAIFTAIF), 35 to 55 (PDVGYFAFLHLATFLAVVIFV), 74 to 94 (ITLSLKLFVSMIPAAIVGIFF), 101 to 121 (IFSETFFIGVFLAITGVFMLL), 135 to 155 (IPYLDAFIIGIFQAFSVLPGI), 175 to 195 (AVKYSFLMSLPVIFGAGVLEM), 208 to 228 (FIVAFLTGILGLHLLKKMVIA), and 229 to 249 (GKLKFFGYYCFLASLFVIFYI).

This sequence belongs to the UppP family.

It localises to the cell membrane. The enzyme catalyses di-trans,octa-cis-undecaprenyl diphosphate + H2O = di-trans,octa-cis-undecaprenyl phosphate + phosphate + H(+). Functionally, catalyzes the dephosphorylation of undecaprenyl diphosphate (UPP). The chain is Undecaprenyl-diphosphatase from Methanococcus vannielii (strain ATCC 35089 / DSM 1224 / JCM 13029 / OCM 148 / SB).